The primary structure comprises 119 residues: Large ribosomal subunit protein bL20 (119 aa).

Belongs to the bacterial ribosomal protein bL20 family.

Binds directly to 23S ribosomal RNA and is necessary for the in vitro assembly process of the 50S ribosomal subunit. It is not involved in the protein synthesizing functions of that subunit. The sequence is that of Large ribosomal subunit protein bL20 from Rhodopseudomonas palustris (strain ATCC BAA-98 / CGA009).